Reading from the N-terminus, the 170-residue chain is MELKDYIRNIQDYPKKGILFRDITTLLQNKDAFKYAIDKMAEQISSEKIDYIVGAESRGFLIGSALAYKLNCGFIPVRKKGKLPYKTISEEYALEYGTDTLYMHEDAIKKGERVLIVDDLIATGGTALAMIKMVEKLEGIVVGSSFLIELKELNGRKEIEKYPVNVLIEY.

This sequence belongs to the purine/pyrimidine phosphoribosyltransferase family. As to quaternary structure, homodimer.

Its subcellular location is the cytoplasm. It carries out the reaction AMP + diphosphate = 5-phospho-alpha-D-ribose 1-diphosphate + adenine. It participates in purine metabolism; AMP biosynthesis via salvage pathway; AMP from adenine: step 1/1. In terms of biological role, catalyzes a salvage reaction resulting in the formation of AMP, that is energically less costly than de novo synthesis. The chain is Adenine phosphoribosyltransferase from Brachyspira hyodysenteriae (strain ATCC 49526 / WA1).